Here is a 262-residue protein sequence, read N- to C-terminus: MIHPSAKIHPTAIVEEGAKIGENVIIGPFCLIGADVDIGKGTVLHSHIVVKGITRIGEDNQIYQFASIGEANQDLKYNGEPTKTIIGDRNRIRESVTIHRGTVQGGGVTRIGDDNLFMINSHIAHDCIIKNRCILANNATLAGHVQLDDFVIVGGMSAIHQFVVVGAHVMLGGGSMVSQDVPPYVMAQGNHARPFGVNIEGLKRRGFDKPTLHAIRNVYKLIYRSDKTLDEVLPEIEQVAQKDSSISFFVEFFKRSTRGIIR.

The protein belongs to the transferase hexapeptide repeat family. LpxA subfamily. As to quaternary structure, homotrimer.

The protein localises to the cytoplasm. The catalysed reaction is a (3R)-hydroxyacyl-[ACP] + UDP-N-acetyl-alpha-D-glucosamine = a UDP-3-O-[(3R)-3-hydroxyacyl]-N-acetyl-alpha-D-glucosamine + holo-[ACP]. It functions in the pathway glycolipid biosynthesis; lipid IV(A) biosynthesis; lipid IV(A) from (3R)-3-hydroxytetradecanoyl-[acyl-carrier-protein] and UDP-N-acetyl-alpha-D-glucosamine: step 1/6. Involved in the biosynthesis of lipid A, a phosphorylated glycolipid that anchors the lipopolysaccharide to the outer membrane of the cell. The polypeptide is Acyl-[acyl-carrier-protein]--UDP-N-acetylglucosamine O-acyltransferase (Mannheimia succiniciproducens (strain KCTC 0769BP / MBEL55E)).